The sequence spans 119 residues: Large ribosomal subunit protein bL19 (119 aa).

It belongs to the bacterial ribosomal protein bL19 family.

Its function is as follows. This protein is located at the 30S-50S ribosomal subunit interface and may play a role in the structure and function of the aminoacyl-tRNA binding site. The polypeptide is Large ribosomal subunit protein bL19 (Pelobacter propionicus (strain DSM 2379 / NBRC 103807 / OttBd1)).